The following is a 330-amino-acid chain: Diacylglycerol acyltransferase/mycolyltransferase Ag85B (330 aa).

A signal peptide spans 1-40 (MTDLSEKVRAWGRRLLVGAAAAVTLPGLIGLAGGAATANA). 82 to 83 (LR) serves as a coordination point for substrate. The segment at 98–108 (FEWYYQSGLSV) is fibronectin-binding. Cysteines 127 and 132 form a disulfide. Serine 166 and aspartate 194 together coordinate substrate. Residue serine 166 is the Nucleophile of the active site. Residue glutamate 270 is part of the active site. Residues 272 to 275 (FVRS), lysine 279, and 302 to 304 (HSW) contribute to the substrate site. The active site involves histidine 302.

Belongs to the mycobacterial A85 antigen family.

The protein localises to the secreted. The catalysed reaction is 2 alpha,alpha'-trehalose 6-mycolate = alpha,alpha'-trehalose 6,6'-bismycolate + alpha,alpha-trehalose. It catalyses the reaction an acyl-CoA + a 1,2-diacyl-sn-glycerol = a triacyl-sn-glycerol + CoA. Its function is as follows. The antigen 85 proteins (FbpA, FbpB, FbpC) are responsible for the high affinity of mycobacteria for fibronectin, a large adhesive glycoprotein, which facilitates the attachment of M.tuberculosis to murine alveolar macrophages (AMs). They also help to maintain the integrity of the cell wall by catalyzing the transfer of mycolic acids to cell wall arabinogalactan and through the synthesis of alpha,alpha-trehalose dimycolate (TDM, cord factor). They catalyze the transfer of a mycoloyl residue from one molecule of alpha,alpha-trehalose monomycolate (TMM) to another TMM, leading to the formation of TDM. The chain is Diacylglycerol acyltransferase/mycolyltransferase Ag85B (fbpB) from Mycobacterium avium.